A 523-amino-acid chain; its full sequence is Succinate-semialdehyde dehydrogenase, mitochondrial (523 aa).

A mitochondrion-targeting transit peptide spans 1 to 35 (MATCFLLRSFWAARPALPPPGRFRPEPAGTPRRSY). Lys-74 carries the post-translational modification N6-acetyllysine. At Lys-114 the chain carries N6-acetyllysine; alternate. The residue at position 114 (Lys-114) is an N6-succinyllysine; alternate. At Lys-123 the chain carries N6-succinyllysine. Lys-128 bears the N6-acetyllysine mark. Position 172 is an N6-succinyllysine (Lys-172). NAD(+) is bound by residues Arg-201 and 216–219 (KPAE). A substrate-binding site is contributed by Arg-201. N6-acetyllysine; alternate is present on Lys-253. Lys-253 is modified (N6-succinyllysine; alternate). Residue 272 to 277 (GSTATG) participates in NAD(+) binding. Glu-294 functions as the Proton acceptor in the catalytic mechanism. Arg-322 contributes to the substrate binding site. Residue Cys-328 is the Nucleophile of the active site. A disulfide bond links Cys-328 and Cys-330. An N6-acetyllysine; alternate modification is found at Lys-347. An N6-succinyllysine; alternate modification is found at Lys-347. Lys-353 carries the N6-acetyllysine modification. Lys-390 is modified (N6-succinyllysine). At Lys-399 the chain carries N6-acetyllysine. Ser-403 is subject to Phosphoserine. Ser-486 is a substrate binding site. Ser-487 is modified (phosphoserine).

The protein belongs to the aldehyde dehydrogenase family. Homotetramer.

Its subcellular location is the mitochondrion. The catalysed reaction is succinate semialdehyde + NAD(+) + H2O = succinate + NADH + 2 H(+). It participates in amino-acid degradation; 4-aminobutanoate degradation. Its activity is regulated as follows. Redox-regulated. Inhibited under oxydizing conditions. Its function is as follows. Catalyzes one step in the degradation of the inhibitory neurotransmitter gamma-aminobutyric acid (GABA). This chain is Succinate-semialdehyde dehydrogenase, mitochondrial (Aldh5a1), found in Mus musculus (Mouse).